A 545-amino-acid polypeptide reads, in one-letter code: CTP synthase (545 aa).

Residues 1-266 (MTTNYIFVTG…DDYICKRFSL (266 aa)) form an amidoligase domain region. Ser-14 is a CTP binding site. Position 14 (Ser-14) interacts with UTP. Residues 15–20 (SLGKGI) and Asp-72 each bind ATP. Mg(2+)-binding residues include Asp-72 and Glu-140. CTP-binding positions include 147–149 (DIE), 187–192 (KTKPTQ), and Lys-223. UTP contacts are provided by residues 187 to 192 (KTKPTQ) and Lys-223. 239–241 (KDV) provides a ligand contact to ATP. A Glutamine amidotransferase type-1 domain is found at 291–542 (TIGMVGKYIE…VKAASEYQKR (252 aa)). Position 352 (Gly-352) interacts with L-glutamine. Cys-379 serves as the catalytic Nucleophile; for glutamine hydrolysis. Residues 380 to 383 (LGMQ), Glu-403, and Arg-470 contribute to the L-glutamine site. Residues His-515 and Glu-517 contribute to the active site.

It belongs to the CTP synthase family. As to quaternary structure, homotetramer.

The enzyme catalyses UTP + L-glutamine + ATP + H2O = CTP + L-glutamate + ADP + phosphate + 2 H(+). The catalysed reaction is L-glutamine + H2O = L-glutamate + NH4(+). It catalyses the reaction UTP + NH4(+) + ATP = CTP + ADP + phosphate + 2 H(+). The protein operates within pyrimidine metabolism; CTP biosynthesis via de novo pathway; CTP from UDP: step 2/2. With respect to regulation, allosterically activated by GTP, when glutamine is the substrate; GTP has no effect on the reaction when ammonia is the substrate. The allosteric effector GTP functions by stabilizing the protein conformation that binds the tetrahedral intermediate(s) formed during glutamine hydrolysis. Inhibited by the product CTP, via allosteric rather than competitive inhibition. Functionally, catalyzes the ATP-dependent amination of UTP to CTP with either L-glutamine or ammonia as the source of nitrogen. Regulates intracellular CTP levels through interactions with the four ribonucleotide triphosphates. This Enterobacter sp. (strain 638) protein is CTP synthase.